Reading from the N-terminus, the 334-residue chain is tRNA methyltransferase 10 homolog A (334 aa).

Disordered stretches follow at residues 1 to 101 (MSLE…SRKR) and 290 to 334 (PLTE…EQNS). Positions 26-40 (HAGNNTPLQENSSAP) are enriched in polar residues. Residues 62–94 (KQWEDQRELRKQKRKEKRQKRKLERQAQAEHNI) adopt a coiled-coil conformation. Positions 71–84 (RKQKRKEKRQKRKL) are enriched in basic residues. The span at 85–98 (ERQAQAEHNIDANS) shows a compositional bias: basic and acidic residues. An SAM-dependent MTase TRM10-type domain is found at 98–289 (SRKRFRHEVQ…SVLPQRKGAI (192 aa)). Positions 305 to 317 (QEDGEDSDSDSSI) are enriched in acidic residues.

The protein belongs to the class IV-like SAM-binding methyltransferase superfamily. TRM10 family.

The enzyme catalyses guanosine(9) in tRNA + S-adenosyl-L-methionine = N(1)-methylguanosine(9) in tRNA + S-adenosyl-L-homocysteine + H(+). S-adenosyl-L-methionine-dependent guanine N(1)-methyltransferase that catalyzes the formation of N(1)-methylguanine at position 9 (m1G9) in tRNAs. Probably not able to catalyze formation of N(1)-methyladenine at position 9 (m1A9) in tRNAs. In Xenopus tropicalis (Western clawed frog), this protein is tRNA methyltransferase 10 homolog A (trmt10a).